Here is a 612-residue protein sequence, read N- to C-terminus: uncharacterized protein (612 aa).

The zn(2)-C6 fungal-type DNA-binding region spans 6 to 32 (CLYCRRRKIKCDKNRPCHNCFVAKREC).

The protein localises to the cytoplasm. Its subcellular location is the nucleus. This is an uncharacterized protein from Schizosaccharomyces pombe (strain 972 / ATCC 24843) (Fission yeast).